The chain runs to 210 residues: Cell division protein SepF (210 aa).

This sequence belongs to the SepF family. As to quaternary structure, homodimer. Interacts with FtsZ.

The protein resides in the cytoplasm. Functionally, cell division protein that is part of the divisome complex and is recruited early to the Z-ring. Probably stimulates Z-ring formation, perhaps through the cross-linking of FtsZ protofilaments. Its function overlaps with FtsA. The polypeptide is Cell division protein SepF (Mycobacterium leprae (strain Br4923)).